Reading from the N-terminus, the 341-residue chain is GTP-binding protein REM 2 (341 aa).

A compositionally biased stretch (acidic residues) spans 1-13; it reads MHTDLDTDMDADT. Disordered regions lie at residues 1–72 and 84–106; these read MHTD…SMPV and VDEL…GSGE. Positions 18–32 are enriched in polar residues; it reads LCSSSSRQASPSGTP. Ser27 carries the post-translational modification Phosphoserine. A compositionally biased stretch (basic and acidic residues) spans 43-54; the sequence is QKPEKLLAELDR. Residues 94–105 show a composition bias toward low complexity; it reads SSSGSSDSLGSG. GTP contacts are provided by residues 122 to 129, 230 to 233, and 261 to 262; these read GESGVGKS, NKSD, and AA. A disordered region spans residues 282 to 309; sequence RGRGHAGGQRPEPSSPDGPAPPTRRESL. Residues 294–303 are compositionally biased toward pro residues; the sequence is PSSPDGPAPP. Ser296 is subject to Phosphoserine.

It belongs to the small GTPase superfamily. RGK family. Expressed in brain and kidney.

It localises to the cell membrane. In terms of biological role, binds GTP saturably and exhibits a low intrinsic rate of GTP hydrolysis. In Rattus norvegicus (Rat), this protein is GTP-binding protein REM 2 (Rem2).